Consider the following 404-residue polypeptide: Metacaspase-1A (404 aa).

Residues 1-10 (MNPHHSHHHS) are compositionally biased toward basic residues. Residues 1–100 (MNPHHSHHHS…PSDPVSFGQG (100 aa)) are disordered. The span at 24-51 (QQQPPSNPYQYNQPSPQPYQGSQPPQNG) shows a compositional bias: low complexity. Active-site residues include His-200 and Cys-256.

This sequence belongs to the peptidase C14B family.

Its function is as follows. Involved in cell death (apoptosis). This Aspergillus niger (strain ATCC MYA-4892 / CBS 513.88 / FGSC A1513) protein is Metacaspase-1A (casA).